The chain runs to 503 residues: Annexin A11 (503 aa).

Pro residues-rich tracts occupy residues 1-17, 80-145, and 155-169; these read MSYP…PPAP, GYPP…PYPG, and SPVP…PSYP. Disordered regions lie at residues 1-35 and 56-178; these read MSYP…MPPI and AANM…GTVT. Annexin repeat units follow at residues 198–269, 270–341, 353–425, and 429–500; these read FDPL…ALMK, TPIL…SLSQ, SLVQ…AVVK, and NTPA…KICG. 2 positions are modified to N6-acetyllysine: Lys-246 and Lys-253. Lys-477 is subject to N6-acetyllysine.

Belongs to the annexin family. Interacts with PDCD6 in a calcium-dependent manner. Interacts with KIF23 during cytokinesis. Interacts with S100A6.

Its subcellular location is the cytoplasm. It localises to the melanosome. It is found in the nucleus envelope. The protein resides in the nucleus. The protein localises to the nucleoplasm. Its subcellular location is the cytoskeleton. It localises to the spindle. In terms of biological role, required for midbody formation and completion of the terminal phase of cytokinesis. Binds specifically to calcyclin in a calcium-dependent manner. The sequence is that of Annexin A11 (ANXA11) from Oryctolagus cuniculus (Rabbit).